The primary structure comprises 24 residues: Brevinin-1JDb (24 aa).

An intrachain disulfide couples Cys-18 to Cys-24.

As to expression, expressed by the skin glands.

The protein localises to the secreted. Functionally, has antibacterial activity against E.coli and S.aureus strains. Has antifungal activity against C.albicans. Has hemolytic activity against rabbit erythrocytes. In Odorrana jingdongensis (Jingdong frog), this protein is Brevinin-1JDb.